The primary structure comprises 271 residues: Short chain dehydrogenase virK (271 aa).

NADP(+) is bound by residues leucine 13, aspartate 59, asparagine 87, tyrosine 168, lysine 172, valine 201, and threonine 203. Tyrosine 168 functions as the Proton donor in the catalytic mechanism. The active-site Lowers pKa of active site Tyr is the lysine 172.

It belongs to the short-chain dehydrogenases/reductases (SDR) family.

It participates in secondary metabolite biosynthesis. Its function is as follows. Short chain dehydrogenase; part of the gene cluster that mediates the biosynthesis of virensols and trichoxide, fungal natural products that contain or are derived from a salicylaldehyde core. The pathway begins with the synthesis of the reduced chain in virensol C by the highly reducing polyketide synthase virA via condensation of one acetate and 8 malonate units. VirA has interesting programming rules since the first 2 ketides are fully reduced, the 3 following ketides undergo beta-dehydration, and the last 3 ketides are only reduced to beta-hydroxys to yield the trihydroxy portion. The production of aldehyde virensol C by virA alone is surprising, since virA does not contain a reductase (R) domain that is typically associated with reductive product release in HRPKS. The cupin-domain enzyme virC is involved in enhancing virA product turnover. The short-chain dehydrogenase virB then oxidizes the C-7 alcohol of virensol C to a ketone, yielding virensol D. Virensol D is further transformed to salicylaldehyde 5-deoxyaurocitrin by the short-chain dehydrogenase virD. VirD catalyzes the dehydrogenation of C-3 to form the beta-ketone aldehyde, which is followed by the generation of the nucleophilic C-2 that is required for the intramolecular aldol condensation between C-2 and C-7, itself followed by dehydration and aromatization which leads to salicylaldehyde 5-deoxyaurocitrin. While the dehydrogenation of virensol D is definitely catalyzed by virD, the aldol condensation and dehydration may be uncatalyzed or assisted by virD. The short chain dehydrogenase virG then converts salicylaldehyde 5-deoxyaurocitrin into virensol B which is further hydroxylated by the cytochrome P450 monooxygenase virE to yield the hydroquinone virensol A. VirI then may oxidize virensol A to form the quinone, while virH performs the epoxidation. Finally, the two remaining short-chain dehydrogenases, virK and virL, are probably responsible for reducing the ketones to the corresponding alcohols to furnish the epoxycyclohexanol structure in trichoxide. The sequence is that of Short chain dehydrogenase virK from Hypocrea virens (strain Gv29-8 / FGSC 10586) (Gliocladium virens).